Reading from the N-terminus, the 411-residue chain is Protein DDI1 homolog 2 (411 aa).

The Ubiquitin-like domain occupies 1–81 (MLLTVFCAPR…LVLRQAERLR (81 aa)). The disordered stretch occupies residues 82 to 144 (APPQPTVPGL…SGVSPQGLDN (63 aa)). The span at 108 to 121 (QNRNRPQQAQRPST) shows a compositional bias: low complexity. Residue aspartate 262 is part of the active site. The Ubiquitin-binding signature appears at 387 to 406 (DEIADRELAEAIQRSVQDSG).

It belongs to the DDI1 family. Homodimer.

It localises to the cytoplasm. It is found in the cytosol. The protein localises to the chromosome. Functionally, aspartic protease that mediates the cleavage of NFE2L1/NRF1 at 'Leu-104', thereby promoting release of NFE2L1/NRF1 from the endoplasmic reticulum membrane. Ubiquitination of NFE2L1/NRF1 is a prerequisite for cleavage, suggesting that DDI2 specifically recognizes and binds ubiquitinated NFE2L1/NRF1. Seems to act as a proteasomal shuttle which links the proteasome and replication fork proteins like RTF2. Required for cellular survival following replication stress. This is Protein DDI1 homolog 2 (ddi2) from Danio rerio (Zebrafish).